Here is a 701-residue protein sequence, read N- to C-terminus: Nucleolar transcription factor 1-B (701 aa).

The interval methionine 1 to glutamine 21 is disordered. 5 DNA-binding regions (HMG box) span residues proline 112–arginine 180, proline 196–methionine 264, threonine 298–leucine 362, proline 422–arginine 489, and lysine 508–methionine 574. The interval methionine 382–lysine 426 is disordered. The segment covering glutamine 408–lysine 426 has biased composition (basic and acidic residues). Residues alanine 584–asparagine 701 form a disordered region. The segment covering threonine 597–serine 612 has biased composition (polar residues). Residues aspartate 615 to glutamate 682 show a composition bias toward acidic residues. Over residues serine 683–serine 695 the composition is skewed to low complexity.

XUBF consists of 2 polypeptides of 82 and 85 kDa, encoded by the same or closely related genes.

Its subcellular location is the nucleus. UBF recognizes the ribosomal RNA gene promotor and activates transcription mediated by RNA polymerase I through cooperative interactions with the species-specific factor SL1. It binds specifically to the upstream control element. The polypeptide is Nucleolar transcription factor 1-B (ubtf-b) (Xenopus laevis (African clawed frog)).